Consider the following 214-residue polypeptide: Adenylate kinase (214 aa).

10–15 (GAGKGT) provides a ligand contact to ATP. Residues 30-59 (STGDMLRAAVKAGTPLGLEAKKVMDAGQLV) are NMP. Residues T31, R36, 57–59 (QLV), 85–88 (GFPR), and Q92 each bind AMP. The segment at 122 to 159 (GRRVHPGSGRVYHVVFNPPKVEGKDDVTGEDLAIRPDD) is LID. ATP contacts are provided by residues R123 and 132–133 (VY). AMP contacts are provided by R156 and R167. Residue Q200 participates in ATP binding.

This sequence belongs to the adenylate kinase family. In terms of assembly, monomer.

It localises to the cytoplasm. The enzyme catalyses AMP + ATP = 2 ADP. The protein operates within purine metabolism; AMP biosynthesis via salvage pathway; AMP from ADP: step 1/1. Catalyzes the reversible transfer of the terminal phosphate group between ATP and AMP. Plays an important role in cellular energy homeostasis and in adenine nucleotide metabolism. This is Adenylate kinase from Shewanella oneidensis (strain ATCC 700550 / JCM 31522 / CIP 106686 / LMG 19005 / NCIMB 14063 / MR-1).